The sequence spans 301 residues: MNPLKKKPRTHSLQNAPEKPDWLKVKLAFPDPKNNPVAIVRNSLEEKKLNTVCESASCPNLNHCWSRKTATYMLGGDICTRRCSYCDVASGKPFPLDPEEPKRIAESSIALDLRHVVITSVNRDDLEDGGAAHFAKTVKEIRKGLPDCKIELLIPDLKVKQEALEIIFECNPDIFNHNLETVKRLFPEVAPQKRYERSLDVLKIASARGFLTKSGLILGMGETLEEVKECMQDLASVGVSLLTLGQYLQPTSTHLPVKEYVVPQVFKDLRIYGKSIGFKGVFSGPLVRSSYHADEQISWNP.

[4Fe-4S] cluster-binding residues include Cys-53, Cys-58, Cys-64, Cys-79, Cys-83, Cys-86, and Ser-290. A Radical SAM core domain is found at 65 to 279 (WSRKTATYML…RIYGKSIGFK (215 aa)).

The protein belongs to the radical SAM superfamily. Lipoyl synthase family. The cofactor is [4Fe-4S] cluster.

It is found in the cytoplasm. It catalyses the reaction [[Fe-S] cluster scaffold protein carrying a second [4Fe-4S](2+) cluster] + N(6)-octanoyl-L-lysyl-[protein] + 2 oxidized [2Fe-2S]-[ferredoxin] + 2 S-adenosyl-L-methionine + 4 H(+) = [[Fe-S] cluster scaffold protein] + N(6)-[(R)-dihydrolipoyl]-L-lysyl-[protein] + 4 Fe(3+) + 2 hydrogen sulfide + 2 5'-deoxyadenosine + 2 L-methionine + 2 reduced [2Fe-2S]-[ferredoxin]. Its pathway is protein modification; protein lipoylation via endogenous pathway; protein N(6)-(lipoyl)lysine from octanoyl-[acyl-carrier-protein]: step 2/2. Catalyzes the radical-mediated insertion of two sulfur atoms into the C-6 and C-8 positions of the octanoyl moiety bound to the lipoyl domains of lipoate-dependent enzymes, thereby converting the octanoylated domains into lipoylated derivatives. This is Lipoyl synthase from Leptospira interrogans serogroup Icterohaemorrhagiae serovar Lai (strain 56601).